Here is a 378-residue protein sequence, read N- to C-terminus: Ribosomal RNA large subunit methyltransferase G (378 aa).

This sequence belongs to the methyltransferase superfamily. RlmG family.

It localises to the cytoplasm. It carries out the reaction guanosine(1835) in 23S rRNA + S-adenosyl-L-methionine = N(2)-methylguanosine(1835) in 23S rRNA + S-adenosyl-L-homocysteine + H(+). In terms of biological role, specifically methylates the guanine in position 1835 (m2G1835) of 23S rRNA. The chain is Ribosomal RNA large subunit methyltransferase G from Salmonella agona (strain SL483).